The sequence spans 888 residues: MNSVWDDARIEDRTVDKPVGSSHAQEKLALVKSTLFKLDQEDRPECDSWVQLVKLICDEDREEEFTTFKELLREVKNVNDKSVTGVALIHYIIVFDRADYIELLHDNPSGAKLDLNLVDDIVGYTPLMWSFSLQRRNCCLELFNAFDEINFNMTNKAGLTAWDMVPPYSPLSEFLEQNNMFRYRTEVKHEIPQISQPKDTSLLMSNEDSTTKETFDNIDLQVAGLTLSPGANDNMFLDSDEKNMNHSQGAATLIDPTYTEDYHGTFDYDKLSPDQYLEFSDFDIPQILNLLISLPQKEPHMTTYPAGLIYQCIRYADHKIKSKPLVESLINLSLTKILTSVSSNGAAGLVSTEASLQAGDIVLQSYWLSCLSFLYYYLCRDDSFFKRHPSVLQELINTIHSIIIELTSSIHCRLISLIDSTLLAYTTIQDVKQTLYKRDWNFFKKRKQAKLLLKEKNRKQLKEQQKKELHRKSQGQENHEEEEGQQDGNDSDDRASTNDDNNSSVSLFYDKEILRHLYPPSFEEQMKPSPLKIVQIFGALSYVLNLHQTHPIFQQQCLSISVNWFATTLFNKILKDKKKRSLSRAHAIQIRLNLSTLESWIQNNDFCVPKPMLIDDFMWQRFPMTLIRDVGEIDLSDPILRNVATYKPIDENNKDLIYDTSNSLFYYQPFHKIAQIHLEPVFQLLQWLQVATTLDSEESLISTMNLLPRITPVQLLKSMEKYNYELNENKFNSKLKKFLNNKIKDSKMSKADAYLQEHEIPYLVLPTIPEMTDLYSKGPDSHSFQPFLPGSIQDDVYEIHDVNFKQRQNEPQISRTNSGTSDFTGDEDKAQYETEGVGESIDINETVEPESNAFNVGNDDYFKELNIPSSTAQRPAWSNNDDMEQNPW.

The Dilute domain maps to 360-745 (DIVLQSYWLS…KKFLNNKIKD (386 aa)). 3 disordered regions span residues 462–504 (KEQQ…NNSS), 805–827 (KQRQ…TGDE), and 865–888 (LNIP…QNPW). 2 stretches are compositionally biased toward polar residues: residues 809–823 (NEPQ…TSDF) and 867–880 (IPSS…WSNN).

It is found in the golgi apparatus. This chain is Dilute domain-containing protein YPR089W, found in Saccharomyces cerevisiae (strain ATCC 204508 / S288c) (Baker's yeast).